Consider the following 203-residue polypeptide: Small ribosomal subunit protein uS2 (203 aa).

The protein belongs to the universal ribosomal protein uS2 family.

This is Small ribosomal subunit protein uS2 from Methanoregula boonei (strain DSM 21154 / JCM 14090 / 6A8).